A 505-amino-acid chain; its full sequence is MAILKSALVGFICFLHFFIVNASDNKSLLTEDIMASQVCNGMFAKKGKTSEITLKIDSYTSDFGGAIRLLIFNWKDVNAIGMEDDDGEKHYICNYEDIEAGVCKDDDYGLYLINQTAPHDSIYSAAVDAESMVSPLKYPVEQSGLYCVFTAPLEGSSEAYKITVTWENYFGNLDATDYPHLFLNPILLAINCLIGIWWSFIMFRYRHDLLQVQKYISGVVALSIVCTMVSTGYFYFANSKGYTTGSKVFAFFLSLAQSARQSYFGFLLLIVSLGYSIVVPSLGSLLRKCQILAGLQFVSSCFFLSSLFISPSNKESLVILFAAPVFLITLFAMFLWIVLALNNTIRDLRIRKQTVKAQMYTRLWIVICFGIVAYASIVAANAILIGIYGQMNYYLKYWKLLWFLNYGYTDILVLILMLTILYLWRPTENNRRFAMSEQVAQDVDEFEMTSSLSNDSLHLHHERPTSPANPHIIHGSADEHQALFAVDDESDDDASTLATSKQKPA.

An N-terminal signal peptide occupies residues 1 to 22 (MAILKSALVGFICFLHFFIVNA). 2 N-linked (GlcNAc...) asparagine glycosylation sites follow: N25 and N114. 5 helical membrane-spanning segments follow: residues 181–201 (LFLN…WSFI), 216–236 (ISGV…YFYF), 266–286 (FLLL…GSLL), 291–311 (ILAG…FISP), and 318–338 (VILF…LWIV). N342 carries an N-linked (GlcNAc...) asparagine glycan. Transmembrane regions (helical) follow at residues 365 to 385 (IVIC…AILI) and 400 to 420 (LLWF…MLTI). N454 carries an N-linked (GlcNAc...) asparagine glycan.

This sequence belongs to the LU7TM family.

The protein resides in the membrane. This is an uncharacterized protein from Schizosaccharomyces pombe (strain 972 / ATCC 24843) (Fission yeast).